We begin with the raw amino-acid sequence, 152 residues long: Small ribosomal subunit protein uS19 (152 aa).

It belongs to the universal ribosomal protein uS19 family.

In Podospora anserina (Pleurage anserina), this protein is Small ribosomal subunit protein uS19 (RPS15).